The sequence spans 297 residues: MWVRHFPVMGPRSASTVALNDKQHDKKVENGGAAASGGGDGGDEKSVVSYWGVPPSKVTKEDGTEWKWNCFRPWETYKADLSIDLTKHHAPTTFLDKFAYWTVKALRYPTDIFFQRRYGCRAMMLETVAAVPGMVGGMLLHCKSLRRFEQSGGWIKALLEEAENERMHLMTFMEVAKPNWYERALVFAVQGVFINAYFVTYLLSPKLAHRIVGYLEEEAIHSYTEFLKELDKGNIENVPAPAIAIDYWRLPKDSTLRDVVLVVRADEAHHRDVNHFAPDIHYQGQQLKDSPAPIGYH.

Residues 17-43 (VALNDKQHDKKVENGGAAASGGGDGGD) are disordered. A helical transmembrane segment spans residues 122–142 (AMMLETVAAVPGMVGGMLLHC). Residues glutamate 126, glutamate 165, and histidine 168 each contribute to the Fe cation site. Residues 184–204 (ALVFAVQGVFINAYFVTYLLS) traverse the membrane as a helical segment. Residues glutamate 216, glutamate 267, and histidine 270 each contribute to the Fe cation site.

Belongs to the alternative oxidase family. As to quaternary structure, homodimer; disulfide-linked. Fe cation is required as a cofactor.

It localises to the mitochondrion inner membrane. The enzyme catalyses 2 a ubiquinol + O2 = 2 a ubiquinone + 2 H2O. Its function is as follows. Catalyzes the cyanide-resistant oxidation of ubiquinol and the reduction of molecular oxygen to water, but does not translocate protons and consequently is not linked to oxidative phosphorylation. May increase respiration when the cytochrome respiratory pathway is restricted, or in response to low temperatures. The sequence is that of Ubiquinol oxidase 2, mitochondrial (AOX2) from Nicotiana tabacum (Common tobacco).